The primary structure comprises 143 residues: Transcription antitermination protein NusB (143 aa).

The protein belongs to the NusB family.

Its function is as follows. Involved in transcription antitermination. Required for transcription of ribosomal RNA (rRNA) genes. Binds specifically to the boxA antiterminator sequence of the ribosomal RNA (rrn) operons. The sequence is that of Transcription antitermination protein NusB from Dehalococcoides mccartyi (strain ATCC BAA-2266 / KCTC 15142 / 195) (Dehalococcoides ethenogenes (strain 195)).